We begin with the raw amino-acid sequence, 606 residues long: MEAVIKAFLTGYPGKTSKKDSKEKPLATSKKDPEKTPLLPTRVNYILIIGVLVLCEVTGVRADVHLLEQPGNLWITWANRTGQTDFCLSTQSATSPFQTCLIGIPSPISEGDFKGYVSDNCTTLGTDRLVSSADFTGGPDNSTTLTYRKVSCLLLKLNVSMWDEPHELQLLGSQSLPNITNIAQISGITGGCVGFRPQGVPWYLGWSRQEATRFLLRHPSFSKSTEPFTVVTADRHNLFMGSEYCGAYGYRFWNMYNCSQVGRQYRCGNARSPRPGLPEIQCTRRGGKWVNQSQEINESEPFSFTVNCTASSLGNASGCCGKAGTILPGKWVDSTQGSFTKPKALPPAIFLICGDRAWQGIPSRPVGGPCYLGKLTMLAPKHTDILKVLVNSSRTGIRRKRSTSHLDDTCSDEVQLWGPTARIFASILAPGVARAQALREIERLACWSVKQANLTTSFLGDLLDDVTSIRHAVLQNRAAIDFLLLAHGHGCEDVAGMCCFNLSDHSESIQKKFQLMKEHVNKIGVDSDPIGSWLRGLFGGIGEWAVHLLKGLLLGLVVILLLVVCLPCLLQIVCGNIRKMINNSISYHTEYKKLQKACGQPESRIV.

The signal sequence occupies residues 1 to 62 (MEAVIKAFLT…VLCEVTGVRA (62 aa)). At 63-552 (DVHLLEQPGN…EWAVHLLKGL (490 aa)) the chain is on the extracellular side. N-linked (GlcNAc...) asparagine; by host glycosylation is found at asparagine 79, asparagine 120, asparagine 141, asparagine 158, and asparagine 178. 7 cysteine pairs are disulfide-bonded: cysteine 87–cysteine 499, cysteine 121–cysteine 152, cysteine 192–cysteine 245, cysteine 258–cysteine 267, cysteine 353–cysteine 370, cysteine 410–cysteine 446, and cysteine 491–cysteine 498. The segment at 185–226 (ISGITGGCVGFRPQGVPWYLGWSRQEATRFLLRHPSFSKSTE) is binding to host receptor. A glycan (N-linked (GlcNAc...) asparagine; by host) is linked at asparagine 257. The binding to host receptor stretch occupies residues 261–288 (VGRQYRCGNARSPRPGLPEIQCTRRGGK). 4 N-linked (GlcNAc...) asparagine; by host glycosylation sites follow: asparagine 291, asparagine 297, asparagine 307, and asparagine 315. Asparagine 391 carries N-linked (GlcNAc...) asparagine; by host glycosylation. The tract at residues 418 to 438 (GPTARIFASILAPGVARAQAL) is fusion peptide. Positions 435 to 485 (AQALREIERLACWSVKQANLTTSFLGDLLDDVTSIRHAVLQNRAAIDFLLL) form a coiled coil. N-linked (GlcNAc...) asparagine; by host glycosylation occurs at asparagine 453. Residues 474-490 (LQNRAAIDFLLLAHGHG) are immunosuppression. N-linked (GlcNAc...) asparagine; by host glycosylation is present at asparagine 501. Positions 503–533 (SDHSESIQKKFQLMKEHVNKIGVDSDPIGSW) form a coiled coil. A helical transmembrane segment spans residues 553–573 (LLGLVVILLLVVCLPCLLQIV). S-palmitoyl cysteine; by host attachment occurs at residues cysteine 565 and cysteine 568. Residues 574–606 (CGNIRKMINNSISYHTEYKKLQKACGQPESRIV) lie on the Cytoplasmic side of the membrane.

It belongs to the Alpharetroviruses envelope glycoprotein family. As to quaternary structure, heterodimer with the transmembrane protein. The mature envelope protein (Env) consists of a trimer of SU-TM heterodimers attached by a labile interchain disulfide bond. Interacts with the host cell entry receptor TVA isoforms pg900 and pg800; this interaction allows the viral attachment. Heterodimer with the surface protein. The mature envelope protein (Env) consists of a trimer of SU-TM heterodimers attached by a labile interchain disulfide bond. Post-translationally, specific enzymatic cleavages in vivo yield mature proteins. Envelope glycoproteins are synthesized as an inactive precursor that is N-glycosylated and processed likely by host cell furin or by a furin-like protease in the Golgi to yield the mature SU and TM proteins. The cleavage site between SU and TM requires the minimal sequence [KR]-X-[KR]-R. The transmembrane protein is palmitoylated. Palmitoylation is necessary for glycoprotein function and infectivity.

The protein resides in the virion membrane. It is found in the host cell membrane. In terms of biological role, the surface protein (SU) attaches the virus to the host cell entry receptor TVA. This interaction triggers the refolding of the transmembrane protein (TM) thereby unmasking its fusion peptide and the formation of a reactive thiolate on Cys-100 to activate its fusogenic potential. Fusion occurs at the host cell plasma membrane. Its function is as follows. The transmembrane protein (TM) acts as a class I viral fusion protein. Under the current model, the protein has at least 3 conformational states: pre-fusion native state, pre-hairpin intermediate state, and post-fusion hairpin state. During viral and target cell membrane fusion, the coiled coil regions (heptad repeats) assume a trimer-of-hairpins structure, positioning the fusion peptide in close proximity to the C-terminal region of the ectodomain. The formation of this structure appears to drive apposition and subsequent fusion of viral and target cell membranes. Membranes fusion leads to delivery of the nucleocapsid into the cytoplasm. This chain is Envelope glycoprotein gp95 (env), found in Avian leukosis virus subgroup A (isolate RSA) (ALV-A RSA).